Consider the following 265-residue polypeptide: MMGRIESVFAKKGKSAFIGFTVAGDPDKETSIRIAKALIDGGTDILEFGVPFSDPVADGPTIQRADDRALASCTTPDTIFAIVREVRAYSEVPIVFLTYYNTIYRRGIDRFYLEAHEAGVDGILVADMPVEESDEVAATAEKYGIDPIFLVTQTTSNERMDTIVRHARGYLYLVSVLGVTGARKTVAPEALALLNRVRSHTDLPLAIGFGISTPEHVTTCNLAGADGVIVGSAIVDIVEKNLGNPDAMEQDLRRYVSVMKKAAEQ.

Active-site proton acceptor residues include glutamate 47 and aspartate 58.

It belongs to the TrpA family. As to quaternary structure, tetramer of two alpha and two beta chains.

It catalyses the reaction (1S,2R)-1-C-(indol-3-yl)glycerol 3-phosphate + L-serine = D-glyceraldehyde 3-phosphate + L-tryptophan + H2O. Its pathway is amino-acid biosynthesis; L-tryptophan biosynthesis; L-tryptophan from chorismate: step 5/5. Functionally, the alpha subunit is responsible for the aldol cleavage of indoleglycerol phosphate to indole and glyceraldehyde 3-phosphate. The polypeptide is Tryptophan synthase alpha chain (Methanoregula boonei (strain DSM 21154 / JCM 14090 / 6A8)).